A 325-amino-acid chain; its full sequence is Peroxidase 1 (325 aa).

The N-terminal stretch at 1–21 (MAIKNILALVVLLSVVGVSVA) is a signal peptide. 4 disulfides stabilise this stretch: Cys-35/Cys-113, Cys-68/Cys-73, Cys-119/Cys-321, and Cys-198/Cys-230. His-66 functions as the Proton acceptor in the catalytic mechanism. Ca(2+)-binding residues include Asp-67, Val-70, Gly-72, Asp-74, and Ser-76. Residue Pro-161 coordinates substrate. Heme b is bound at residue His-191. Ca(2+) is bound at residue Thr-192. Asn-207 carries an N-linked (GlcNAc...) asparagine glycan. The Ca(2+) site is built by Asp-242, Ser-245, and Asp-250.

This sequence belongs to the peroxidase family. Classical plant (class III) peroxidase subfamily. The cofactor is heme b. It depends on Ca(2+) as a cofactor. Slightly expressed in roots.

It localises to the secreted. It carries out the reaction 2 a phenolic donor + H2O2 = 2 a phenolic radical donor + 2 H2O. Functionally, removal of H(2)O(2), oxidation of toxic reductants, biosynthesis and degradation of lignin, suberization, auxin catabolism, response to environmental stresses such as wounding, pathogen attack and oxidative stress. These functions might be dependent on each isozyme/isoform in each plant tissue. The polypeptide is Peroxidase 1 (PER1) (Arabidopsis thaliana (Mouse-ear cress)).